Reading from the N-terminus, the 530-residue chain is Inactive ubiquitin carboxyl-terminal hydrolase 17-like protein 4 (530 aa).

The USP domain maps to 80–375 (AGLQNMGNTC…QAYVLFYIQK (296 aa)). Over residues 382-392 (SESVSRGREPR) the composition is skewed to basic and acidic residues. 2 disordered regions span residues 382-410 (SESV…ELKR) and 493-530 (NSTD…LVCQ). Positions 495 to 510 (TDQESMNTGTLASLQG) are enriched in polar residues. Positions 511 to 524 (RTRRSKGKNKHSKR) are enriched in basic residues.

This sequence belongs to the peptidase C19 family. USP17 subfamily.

The protein resides in the nucleus. The protein localises to the endoplasmic reticulum. The protein is Inactive ubiquitin carboxyl-terminal hydrolase 17-like protein 4 (USP17L4) of Homo sapiens (Human).